The sequence spans 130 residues: Small ribosomal subunit protein uS9 (130 aa).

Belongs to the universal ribosomal protein uS9 family.

In Herminiimonas arsenicoxydans, this protein is Small ribosomal subunit protein uS9.